The primary structure comprises 231 residues: 5'-methylthioadenosine/S-adenosylhomocysteine nucleosidase (231 aa).

Glu-12 acts as the Proton acceptor in catalysis. Substrate-binding positions include Gly-78, Met-153, and 174-175 (ME). The Proton donor role is filled by Asp-198.

This sequence belongs to the PNP/UDP phosphorylase family. MtnN subfamily.

The catalysed reaction is S-adenosyl-L-homocysteine + H2O = S-(5-deoxy-D-ribos-5-yl)-L-homocysteine + adenine. It carries out the reaction S-methyl-5'-thioadenosine + H2O = 5-(methylsulfanyl)-D-ribose + adenine. It catalyses the reaction 5'-deoxyadenosine + H2O = 5-deoxy-D-ribose + adenine. Its pathway is amino-acid biosynthesis; L-methionine biosynthesis via salvage pathway; S-methyl-5-thio-alpha-D-ribose 1-phosphate from S-methyl-5'-thioadenosine (hydrolase route): step 1/2. Its function is as follows. Catalyzes the irreversible cleavage of the glycosidic bond in both 5'-methylthioadenosine (MTA) and S-adenosylhomocysteine (SAH/AdoHcy) to adenine and the corresponding thioribose, 5'-methylthioribose and S-ribosylhomocysteine, respectively. Also cleaves 5'-deoxyadenosine, a toxic by-product of radical S-adenosylmethionine (SAM) enzymes, into 5-deoxyribose and adenine. This Bacillus cereus (strain B4264) protein is 5'-methylthioadenosine/S-adenosylhomocysteine nucleosidase.